Here is a 225-residue protein sequence, read N- to C-terminus: Methylthioribulose-1-phosphate dehydratase (225 aa).

The Zn(2+) site is built by His-106 and His-108.

It belongs to the aldolase class II family. MtnB subfamily. Zn(2+) is required as a cofactor.

It carries out the reaction 5-(methylsulfanyl)-D-ribulose 1-phosphate = 5-methylsulfanyl-2,3-dioxopentyl phosphate + H2O. It participates in amino-acid biosynthesis; L-methionine biosynthesis via salvage pathway; L-methionine from S-methyl-5-thio-alpha-D-ribose 1-phosphate: step 2/6. Catalyzes the dehydration of methylthioribulose-1-phosphate (MTRu-1-P) into 2,3-diketo-5-methylthiopentyl-1-phosphate (DK-MTP-1-P). This Xanthomonas oryzae pv. oryzae (strain KACC10331 / KXO85) protein is Methylthioribulose-1-phosphate dehydratase.